Reading from the N-terminus, the 243-residue chain is Leucyl/phenylalanyl-tRNA--protein transferase (243 aa).

Belongs to the L/F-transferase family.

It is found in the cytoplasm. It carries out the reaction N-terminal L-lysyl-[protein] + L-leucyl-tRNA(Leu) = N-terminal L-leucyl-L-lysyl-[protein] + tRNA(Leu) + H(+). The catalysed reaction is N-terminal L-arginyl-[protein] + L-leucyl-tRNA(Leu) = N-terminal L-leucyl-L-arginyl-[protein] + tRNA(Leu) + H(+). It catalyses the reaction L-phenylalanyl-tRNA(Phe) + an N-terminal L-alpha-aminoacyl-[protein] = an N-terminal L-phenylalanyl-L-alpha-aminoacyl-[protein] + tRNA(Phe). Its function is as follows. Functions in the N-end rule pathway of protein degradation where it conjugates Leu, Phe and, less efficiently, Met from aminoacyl-tRNAs to the N-termini of proteins containing an N-terminal arginine or lysine. The protein is Leucyl/phenylalanyl-tRNA--protein transferase of Saccharophagus degradans (strain 2-40 / ATCC 43961 / DSM 17024).